The following is a 210-amino-acid chain: Phosphoenolpyruvate guanylyltransferase (210 aa).

Phosphoenolpyruvate is bound by residues Thr-130, Gly-146, and Ser-149.

It belongs to the CofC family.

The enzyme catalyses phosphoenolpyruvate + GTP + H(+) = enolpyruvoyl-2-diphospho-5'-guanosine + diphosphate. The protein operates within cofactor biosynthesis; coenzyme F420 biosynthesis. In terms of biological role, guanylyltransferase that catalyzes the activation of phosphoenolpyruvate (PEP) as enolpyruvoyl-2-diphospho-5'-guanosine, via the condensation of PEP with GTP. It is involved in the biosynthesis of coenzyme F420, a hydride carrier cofactor. This Roseiflexus castenholzii (strain DSM 13941 / HLO8) protein is Phosphoenolpyruvate guanylyltransferase.